The sequence spans 343 residues: Dihydroorotate dehydrogenase (quinone) (343 aa).

FMN contacts are provided by residues 61-65 (AGLDK) and Thr-85. Lys-65 is a binding site for substrate. A substrate-binding site is contributed by 110-114 (NRMGF). The FMN site is built by Asn-138 and Asn-171. Asn-171 is a substrate binding site. Residue Ser-174 is the Nucleophile of the active site. Residue Asn-176 participates in substrate binding. FMN is bound by residues Lys-216 and Thr-244. Residue 245–246 (NT) participates in substrate binding. FMN contacts are provided by residues Gly-267, Gly-296, and 317 to 318 (YS).

This sequence belongs to the dihydroorotate dehydrogenase family. Type 2 subfamily. Monomer. Requires FMN as cofactor.

The protein resides in the cell membrane. It catalyses the reaction (S)-dihydroorotate + a quinone = orotate + a quinol. It functions in the pathway pyrimidine metabolism; UMP biosynthesis via de novo pathway; orotate from (S)-dihydroorotate (quinone route): step 1/1. In terms of biological role, catalyzes the conversion of dihydroorotate to orotate with quinone as electron acceptor. The polypeptide is Dihydroorotate dehydrogenase (quinone) (Pseudomonas savastanoi pv. phaseolicola (strain 1448A / Race 6) (Pseudomonas syringae pv. phaseolicola (strain 1448A / Race 6))).